The chain runs to 462 residues: Retinoic acid receptor RXR-alpha (462 aa).

Residues 1–107 (MDTKHFLPLD…MNPVSSSEDI (107 aa)) form a disordered region. The modulating stretch occupies residues 1 to 134 (MDTKHFLPLD…GNMASFTKHI (134 aa)). Residue K4 forms a Glycyl lysine isopeptide (Lys-Gly) (interchain with G-Cter in SUMO2) linkage. The segment covering 11–24 (FSTQVNSSLTSPTG) has biased composition (polar residues). Phosphoserine occurs at positions 21 and 27. Residues 49–58 (SPISTLSSPI) are compositionally biased toward polar residues. Phosphoserine; by MAPK8 and MAPK9 occurs at positions 56 and 70. The span at 78-104 (SVPTTPTLGFSTGSPQLSSPMNPVSSS) shows a compositional bias: polar residues. Phosphothreonine; by MAPK8 and MAPK9 is present on T82. K108 participates in a covalent cross-link: Glycyl lysine isopeptide (Lys-Gly) (interchain with G-Cter in SUMO). Phosphoserine is present on S129. Positions 135 and 138 each coordinate Zn(2+). The segment at 135–155 (CAICGDRSSGKHYGVYSCEGC) adopts an NR C4-type zinc-finger fold. A DNA-binding region (nuclear receptor) is located at residues 135 to 200 (CAICGDRSSG…RYQKCLAMGM (66 aa)). K145 is modified (N6-acetyllysine; by EP300). The Zn(2+) site is built by C152 and C155. The interval 160 to 165 (KRTVRK) is nuclear localization signal. Zn(2+) contacts are provided by C171, C177, C187, and C190. An NR C4-type zinc finger spans residues 171–195 (CRDNKDCLIDKRQRNRCQYCRYQKC). The tract at residues 201 to 224 (KREAVQEERQRGKDRNENEVESTS) is hinge. Positions 206 to 218 (QEERQRGKDRNEN) are enriched in basic and acidic residues. Residues 206–228 (QEERQRGKDRNENEVESTSSANE) form a disordered region. The 232-residue stretch at 227 to 458 (NEDMPVERIL…TFLMEMLEAP (232 aa)) folds into the NR LBD domain. S259 carries the phosphoserine modification. S260 is modified (phosphoserine; by MAPK8 and MAPK9). R316 and A327 together coordinate 9-cis-retinoate. All-trans-retinoate is bound by residues R316 and A327. A required for nuclear export region spans residues 348–368 (RVLTELVSKMRDMQMDKTELG).

This sequence belongs to the nuclear hormone receptor family. NR2 subfamily. Homodimer. Heterodimer (via C-terminus) with RARA; required for ligand-dependent retinoic acid receptor transcriptional activity; association with RARA is enhanced by pulsatile shear stress. Heterodimer with PPARA (via the leucine-like zipper in the LBD); the interaction is required for PPARA transcriptional activity. Heterodimerizes with PPARG. Heterodimerizes (via NR LBD) with RARB. Heterodimerizes with NR1H4; the heterodimerization enhances the binding affinity for LXXLL motifs from coactivators. Interacts with NCOA3 and NCOA6 coactivators. Interacts with coactivator FAM120B. Interacts with coactivator PELP1, SENP6, SFPQ, DNTTIP2 and RNF8. Interacts with PRMT2. Interacts with ASXL1. Interacts with BHLHE40/DEC1, BHLHE41/DEC2, NCOR1 and NCOR2. Interacts in a ligand-dependent fashion with MED1 and NCOA1. Interacts with VDR. Interacts with EP300; the interaction is decreased by 9-cis retinoic acid. Heterodimer (via C-terminus) with NR4A1 (via DNA-binding domain); DNA-binding of the heterodimer is enhanced by 9-cis retinoic acid. NR4A1 competes with EP300 for interaction with RXRA and thereby attenuates EP300 mediated acetylation of RXRA. In the absence of hormonal ligand, interacts with TACC1. Interacts ith IGFBP3. As to quaternary structure, (Microbial infection) Interacts (via the DNA binding domain) with HCV core protein; the interaction enhances the transcriptional activities of the RXRA/RARA and the RXRA/PPARA heterodimers. In terms of processing, acetylated by EP300; acetylation enhances DNA binding and transcriptional activity. Phosphorylated on serine and threonine residues mainly in the N-terminal modulating domain. Constitutively phosphorylated on Ser-21 in the presence or absence of ligand. Under stress conditions, hyperphosphorylated by activated JNK on Ser-56, Ser-70, Thr-82 and Ser-260. Phosphorylated on Ser-27, in vitro, by PKA. This phosphorylation is required for repression of cAMP-mediated transcriptional activity of RARA. Post-translationally, ubiquitinated by UBR5, leading to its degradation: UBR5 specifically recognizes and binds ligand-bound RXRA when it is not associated with coactivators (NCOAs). In presence of NCOAs, the UBR5-degron is not accessible, preventing its ubiquitination and degradation. In terms of processing, sumoylation negatively regulates transcriptional activity. Desumoylated specifically by SENP6. Expressed in lung fibroblasts (at protein level). Expressed in monocytes. Highly expressed in liver, also found in kidney and brain.

It is found in the nucleus. It localises to the cytoplasm. The protein resides in the mitochondrion. In terms of biological role, receptor for retinoic acid that acts as a transcription factor. Forms homo- or heterodimers with retinoic acid receptors (RARs) and binds to target response elements in response to their ligands, all-trans or 9-cis retinoic acid, to regulate gene expression in various biological processes. The RAR/RXR heterodimers bind to the retinoic acid response elements (RARE) composed of tandem 5'-AGGTCA-3' sites known as DR1-DR5 to regulate transcription. The high affinity ligand for retinoid X receptors (RXRs) is 9-cis retinoic acid. In the absence of ligand, the RXR-RAR heterodimers associate with a multiprotein complex containing transcription corepressors that induce histone deacetylation, chromatin condensation and transcriptional suppression. On ligand binding, the corepressors dissociate from the receptors and coactivators are recruited leading to transcriptional activation. Serves as a common heterodimeric partner for a number of nuclear receptors, such as RARA, RARB and PPARA. The RXRA/RARB heterodimer can act as a transcriptional repressor or transcriptional activator, depending on the RARE DNA element context. The RXRA/PPARA heterodimer is required for PPARA transcriptional activity on fatty acid oxidation genes such as ACOX1 and the P450 system genes. Together with RARA, positively regulates microRNA-10a expression, thereby inhibiting the GATA6/VCAM1 signaling response to pulsatile shear stress in vascular endothelial cells. Acts as an enhancer of RARA binding to RARE DNA element. May facilitate the nuclear import of heterodimerization partners such as VDR and NR4A1. Promotes myelin debris phagocytosis and remyelination by macrophages. Plays a role in the attenuation of the innate immune system in response to viral infections, possibly by negatively regulating the transcription of antiviral genes such as type I IFN genes. Involved in the regulation of calcium signaling by repressing ITPR2 gene expression, thereby controlling cellular senescence. The sequence is that of Retinoic acid receptor RXR-alpha (RXRA) from Homo sapiens (Human).